Here is a 260-residue protein sequence, read N- to C-terminus: Indole-3-glycerol phosphate synthase (260 aa).

The protein belongs to the TrpC family.

It catalyses the reaction 1-(2-carboxyphenylamino)-1-deoxy-D-ribulose 5-phosphate + H(+) = (1S,2R)-1-C-(indol-3-yl)glycerol 3-phosphate + CO2 + H2O. The protein operates within amino-acid biosynthesis; L-tryptophan biosynthesis; L-tryptophan from chorismate: step 4/5. The polypeptide is Indole-3-glycerol phosphate synthase (Ruminiclostridium cellulolyticum (strain ATCC 35319 / DSM 5812 / JCM 6584 / H10) (Clostridium cellulolyticum)).